Consider the following 520-residue polypeptide: Laccase (520 aa).

The signal sequence occupies residues 1–21 (MHTFLRSTALVVAGLSARALA). 2 Plastocyanin-like domains span residues 22-148 (SIGP…FVVY) and 160-304 (VDDD…ILRY). Residue N75 is glycosylated (N-linked (GlcNAc...) asparagine). Positions 85, 87, 130, and 132 each coordinate Cu cation. Intrachain disulfides connect C106-C509 and C138-C227. N-linked (GlcNAc...) asparagine glycans are attached at residues N352 and N402. Residues 373–496 (TVPVLLQILS…VFAEDIPDVA (124 aa)) enclose the Plastocyanin-like 3 domain. Positions 418, 421, 423, 473, 474, 475, and 479 each coordinate Cu cation.

This sequence belongs to the multicopper oxidase family. Requires Cu cation as cofactor.

Its subcellular location is the secreted. The catalysed reaction is 4 hydroquinone + O2 = 4 benzosemiquinone + 2 H2O. In terms of biological role, lignin degradation and detoxification of lignin-derived products. This chain is Laccase (LAC), found in Phlebia radiata (White-rot fungus).